Consider the following 109-residue polypeptide: 12 kDa heat shock protein (109 aa).

Over residues 1–21 the composition is skewed to basic and acidic residues; it reads MSDAGRKGFGEKASEALKPDS. A disordered region spans residues 1-82; the sequence is MSDAGRKGFG…SLADQARDYM (82 aa). Serine 21 bears the Phosphoserine; by ATM or ATR mark. Serine 24 is modified (phosphoserine). Composition is skewed to basic and acidic residues over residues 28 to 50 and 58 to 67; these read QGKE…EDNK and DSAEKGKDNA. Phosphoserine occurs at positions 59, 73, and 97.

This sequence to S.pombe hsp9 and C.albicans WH11.

Its function is as follows. May play a role in a switch from carbohydrate utilizing metabolism to fatty acid utilizing metabolism. This chain is 12 kDa heat shock protein (HSP12), found in Saccharomyces cerevisiae (strain ATCC 204508 / S288c) (Baker's yeast).